Reading from the N-terminus, the 198-residue chain is dCTP deaminase (198 aa).

DCTP-binding positions include 110–115, aspartate 128, 136–138, tyrosine 171, lysine 178, and glutamine 182; these read RSSLAR and VLE. The active-site Proton donor/acceptor is the glutamate 138. The interval 168–198 is disordered; the sequence is ARPYNKREDAKYRDQKGAVASRISQDEKVNK. Residues 172–183 show a composition bias toward basic and acidic residues; the sequence is NKREDAKYRDQK.

Belongs to the dCTP deaminase family. Homotrimer.

The catalysed reaction is dCTP + H2O + H(+) = dUTP + NH4(+). Its pathway is pyrimidine metabolism; dUMP biosynthesis; dUMP from dCTP (dUTP route): step 1/2. Catalyzes the deamination of dCTP to dUTP. This chain is dCTP deaminase, found in Colwellia psychrerythraea (strain 34H / ATCC BAA-681) (Vibrio psychroerythus).